A 146-amino-acid polypeptide reads, in one-letter code: Flagellar assembly factor FliW (146 aa).

Belongs to the FliW family. Interacts with translational regulator CsrA and flagellin(s).

The protein resides in the cytoplasm. Acts as an anti-CsrA protein, binds CsrA and prevents it from repressing translation of its target genes, one of which is flagellin. Binds to flagellin and participates in the assembly of the flagellum. In Azoarcus sp. (strain BH72), this protein is Flagellar assembly factor FliW.